The sequence spans 662 residues: DNA ligase (662 aa).

NAD(+) contacts are provided by residues 34 to 38, 83 to 84, and glutamate 113; these read DYDYD and SI. The active-site N6-AMP-lysine intermediate is lysine 115. Residues arginine 136, glutamate 172, lysine 286, and lysine 310 each contribute to the NAD(+) site. Residues cysteine 404, cysteine 407, cysteine 422, and cysteine 427 each contribute to the Zn(2+) site. Residues 583-662 form the BRCT domain; sequence RASASCQGKT…SDLLKILYPN (80 aa).

The protein belongs to the NAD-dependent DNA ligase family. LigA subfamily. Mg(2+) serves as cofactor. The cofactor is Mn(2+).

It catalyses the reaction NAD(+) + (deoxyribonucleotide)n-3'-hydroxyl + 5'-phospho-(deoxyribonucleotide)m = (deoxyribonucleotide)n+m + AMP + beta-nicotinamide D-nucleotide.. Functionally, DNA ligase that catalyzes the formation of phosphodiester linkages between 5'-phosphoryl and 3'-hydroxyl groups in double-stranded DNA using NAD as a coenzyme and as the energy source for the reaction. It is essential for DNA replication and repair of damaged DNA. The chain is DNA ligase from Chlamydia felis (strain Fe/C-56) (Chlamydophila felis).